The sequence spans 588 residues: Nucleoporin ndc-1 (588 aa).

The span at 1-12 shows a compositional bias: polar residues; the sequence is MMGDSHSSFTTT. Residues 1-55 are disordered; sequence MMGDSHSSFTTTTDEHLYNQFSPGRRKNDFPAASSSSSSPNLRRSPNRTVSSPRV. Residues 1–79 lie on the Cytoplasmic side of the membrane; the sequence is MMGDSHSSFT…FQAEISVRKR (79 aa). The span at 31–48 shows a compositional bias: low complexity; the sequence is PAASSSSSSPNLRRSPNR. Residues 80-100 traverse the membrane as a helical segment; sequence LAGAACGYLSTIFFIVTVSIL. Over 101-122 the chain is Perinuclear space; the sequence is KLTIWAPFSSVQDSLAWWIYPN. The helical transmembrane segment at 123 to 143 threads the bilayer; it reads AWASIIFVGIASVAMSLFSII. Topologically, residues 144–159 are cytoplasmic; that stretch reads KFCKVDQLPRLAATDT. A helical membrane pass occupies residues 160–180; the sequence is FALAGVALEFVTRLTFVYTAF. Over 181-190 the chain is Perinuclear space; sequence CVADFSFSRE. The chain crosses the membrane as a helical span at residues 191-211; the sequence is FAFVAISLAIAISSALVVFRS. Residues 212–255 lie on the Cytoplasmic side of the membrane; sequence DYQLNFSHIQVNSVKTLIDFGTSLPYANISEICGIDAAISYTAA. A helical transmembrane segment spans residues 256 to 276; it reads VALILVVGPMVSGFSAWWLLL. A topological domain (perinuclear space) is located at residue Asn-277. The helical transmembrane segment at 278–298 threads the bilayer; it reads IPFHVVLFGLCFTQQFYSKIS. The Cytoplasmic portion of the chain corresponds to 299–588; the sequence is MKIVNQIVMK…IRMICLTDEL (290 aa).

Belongs to the NDC1 family.

Its subcellular location is the nucleus. The protein localises to the nuclear pore complex. The protein resides in the nucleus membrane. Its function is as follows. Component of the nuclear pore complex (NPC), which plays a key role in de novo assembly and insertion of NPC in the nuclear envelope. Plays a role in postmitotic nuclear pore complex assembly potentially by promoting localization of nuclear pore complex proteins to the nuclear rim. The protein is Nucleoporin ndc-1 of Caenorhabditis elegans.